The following is a 591-amino-acid chain: Frizzled and smoothened-like protein F (591 aa).

The signal sequence occupies residues 1–17 (MKILIIFIIFIISYISG). Topologically, residues 18 to 244 (FEIPKGFGIG…KWDQLLTMSK (227 aa)) are extracellular. Residues 30 to 177 (IPDAECLNYI…GTFAVPCSDP (148 aa)) enclose the FZ domain. Disulfide bonds link cysteine 35–cysteine 105, cysteine 48–cysteine 98, and cysteine 123–cysteine 174. Residues asparagine 167, asparagine 187, asparagine 202, and asparagine 230 are each glycosylated (N-linked (GlcNAc...) asparagine). The chain crosses the membrane as a helical span at residues 245–265 (ILSTISFILSLYNVLTFGIIN). Topologically, residues 266–275 (KKVSDPHKCT) are cytoplasmic. A helical membrane pass occupies residues 276 to 296 (CFFSGSIALVNLCDIITYGIG). At 297 to 321 (YEELLCPEPGRSAKQQLDPVCGLTG) the chain is on the extracellular side. Residues 322–342 (AFFHLGITYCVLWSMTMGLVL) traverse the membrane as a helical segment. Residues 343-353 (YCSVKRQKWFK) lie on the Cytoplasmic side of the membrane. The chain crosses the membrane as a helical span at residues 354–374 (FNYFLIGNTTFTITTVVIAAA). At 375–397 (TSKFEAGLGSIECWIRDRWYAIS) the chain is on the extracellular side. The helical transmembrane segment at 398–418 (LFWIPCGIALLIGSFCIIAVI) threads the bilayer. Over 419–442 (HEVYKTSKKSISNRNDLLQRELKP) the chain is Cytoplasmic. The chain crosses the membrane as a helical span at residues 443-463 (LLIVIFISGSFLYLFIFFFDI). Residues 464–495 (ERKFGGYRSAVEDYVLCLLNGSQEECFTTGPS) lie on the Extracellular side of the membrane. Asparagine 483 carries N-linked (GlcNAc...) asparagine glycosylation. The helical transmembrane segment at 496-516 (YVPYFLFYLVIRWFGIIFFLF) threads the bilayer. Topologically, residues 517–591 (YGTSNIARKI…AVELESIKIN (75 aa)) are cytoplasmic. Residues 538–571 (SSISPKSTPKSSPKNSDSKINSNSTNNNNMILND) are compositionally biased toward low complexity. The disordered stretch occupies residues 538–573 (SSISPKSTPKSSPKNSDSKINSNSTNNNNMILNDNN).

This sequence belongs to the G-protein coupled receptor Fz/Smo family.

It is found in the membrane. This is Frizzled and smoothened-like protein F (fslF) from Dictyostelium discoideum (Social amoeba).